Reading from the N-terminus, the 114-residue chain is Secretoglobin family 2B member 2 (114 aa).

An N-terminal signal peptide occupies residues 1–23 (MKGTLLLLALLVTGELGFQRTEA).

It belongs to the secretoglobin family. In terms of tissue distribution, expressed in lacrimal gland.

The protein localises to the secreted. This is Secretoglobin family 2B member 2 (Scgb2b2) from Mus musculus (Mouse).